A 330-amino-acid chain; its full sequence is Tryptophan--tRNA ligase (330 aa).

ATP-binding positions include 10-12 and 18-19; these read QAT and GN. Positions 11–19 match the 'HIGH' region motif; the sequence is ATGSLHLGN. Asp-134 contacts L-tryptophan. ATP-binding positions include 146–148, Ile-186, and 195–199; these read GED and KMSKS. A 'KMSKS' region motif is present at residues 195-199; sequence KMSKS.

This sequence belongs to the class-I aminoacyl-tRNA synthetase family. As to quaternary structure, homodimer.

The protein localises to the cytoplasm. The enzyme catalyses tRNA(Trp) + L-tryptophan + ATP = L-tryptophyl-tRNA(Trp) + AMP + diphosphate + H(+). Functionally, catalyzes the attachment of tryptophan to tRNA(Trp). The chain is Tryptophan--tRNA ligase from Rickettsia felis (strain ATCC VR-1525 / URRWXCal2) (Rickettsia azadi).